The following is a 559-amino-acid chain: Serine/threonine-protein kinase VRK1 (559 aa).

Positions 32–388 (YIVGKQFATG…EDDDEEEEVI (357 aa)) constitute a Protein kinase domain. ATP-binding positions include 38–46 (FATGGFGRI) and Lys61. Asp167 serves as the catalytic Proton acceptor. 2 disordered regions span residues 315–419 (EAAQ…ATSD) and 448–559 (SSCE…SSEV). Composition is skewed to polar residues over residues 405 to 418 (RSFN…TATS) and 449 to 460 (SCESQYESNEPG). Residues 533-542 (TSARYQEKRA) show a composition bias toward basic and acidic residues. Over residues 545-559 (NTKPTFDDSSCSSEV) the composition is skewed to polar residues.

Belongs to the protein kinase superfamily. CK1 Ser/Thr protein kinase family. VRK subfamily. In terms of processing, autophosphorylates in vitro.

It is found in the nucleus. The protein localises to the cytoplasm. The protein resides in the cajal body. It carries out the reaction L-seryl-[protein] + ATP = O-phospho-L-seryl-[protein] + ADP + H(+). The catalysed reaction is L-threonyl-[protein] + ATP = O-phospho-L-threonyl-[protein] + ADP + H(+). In terms of biological role, serine/threonine kinase that phosphorylates baf-1, thus regulating the association of baf-1 with chromatin and nuclear membrane proteins during nuclear envelope formation. May act through the egl-17 signaling pathway. Essential in hermaphrodites for formation of the vulva, uterus, and uterine seam cells and for development and maintenance of the somatic gonad and thus the germ line. Acts to prevent cep-1 from triggering an inappropriate cell cycle arrest, thereby promoting germ cell proliferation. Regulates anchor cell polarity and the timing of anchor cell invasion through the basement membranes separating vulval and somatic gonadal cells during the L3 larval stage. This is Serine/threonine-protein kinase VRK1 from Caenorhabditis briggsae.